The sequence spans 120 residues: Seripauperin-6 (120 aa).

A signal peptide spans 1–20; the sequence is MVKLTSIAAGVAAIAATASA.

Belongs to the SRP1/TIP1 family. Seripauperin subfamily.

This chain is Seripauperin-6 (PAU6), found in Saccharomyces cerevisiae (strain ATCC 204508 / S288c) (Baker's yeast).